The following is a 546-amino-acid chain: CTP synthase (546 aa).

The segment at 1-269 (MNSNTKIIFV…DAKLVELLNL (269 aa)) is amidoligase domain. Ser16 lines the CTP pocket. Ser16 serves as a coordination point for UTP. Residues 17–22 (SLGKGV) and Asp74 each bind ATP. The Mg(2+) site is built by Asp74 and Glu143. Residues 150–152 (DIE), 190–195 (KTKPTQ), and Lys226 contribute to the CTP site. Residues 190-195 (KTKPTQ) and Lys226 contribute to the UTP site. Positions 294–546 (IIAMVGKYVS…IQAAIENSNN (253 aa)) constitute a Glutamine amidotransferase type-1 domain. Gly356 is a binding site for L-glutamine. The Nucleophile; for glutamine hydrolysis role is filled by Cys383. L-glutamine-binding positions include 384–387 (LGMQ), Glu407, and Arg474. Active-site residues include His519 and Glu521.

It belongs to the CTP synthase family. In terms of assembly, homotetramer.

It catalyses the reaction UTP + L-glutamine + ATP + H2O = CTP + L-glutamate + ADP + phosphate + 2 H(+). The enzyme catalyses L-glutamine + H2O = L-glutamate + NH4(+). It carries out the reaction UTP + NH4(+) + ATP = CTP + ADP + phosphate + 2 H(+). The protein operates within pyrimidine metabolism; CTP biosynthesis via de novo pathway; CTP from UDP: step 2/2. With respect to regulation, allosterically activated by GTP, when glutamine is the substrate; GTP has no effect on the reaction when ammonia is the substrate. The allosteric effector GTP functions by stabilizing the protein conformation that binds the tetrahedral intermediate(s) formed during glutamine hydrolysis. Inhibited by the product CTP, via allosteric rather than competitive inhibition. In terms of biological role, catalyzes the ATP-dependent amination of UTP to CTP with either L-glutamine or ammonia as the source of nitrogen. Regulates intracellular CTP levels through interactions with the four ribonucleotide triphosphates. The sequence is that of CTP synthase from Francisella tularensis subsp. holarctica (strain FTNF002-00 / FTA).